We begin with the raw amino-acid sequence, 333 residues long: Ornithine carbamoyltransferase (333 aa).

Residues 56–59 (STRT), glutamine 83, arginine 107, and 134–137 (HPTQ) each bind carbamoyl phosphate. L-ornithine is bound by residues asparagine 167, aspartate 231, and 235-236 (SM). Residues 273–274 (CL) and arginine 318 contribute to the carbamoyl phosphate site.

This sequence belongs to the aspartate/ornithine carbamoyltransferase superfamily. OTCase family.

It is found in the cytoplasm. It carries out the reaction carbamoyl phosphate + L-ornithine = L-citrulline + phosphate + H(+). The protein operates within amino-acid biosynthesis; L-arginine biosynthesis; L-arginine from L-ornithine and carbamoyl phosphate: step 1/3. Its function is as follows. Reversibly catalyzes the transfer of the carbamoyl group from carbamoyl phosphate (CP) to the N(epsilon) atom of ornithine (ORN) to produce L-citrulline. The polypeptide is Ornithine carbamoyltransferase (argF) (Staphylococcus aureus (strain Mu50 / ATCC 700699)).